The following is a 422-amino-acid chain: MPRSFLVKSKKAHSYHQPRSPGPDYSLRLENVLAPGGADGTSSAGGAQTEPRGRLSPESQLTEAPDRSSASPGSCEGSVCDRSSEFEDFWRPPSPSVSPASEKSVCPSLDEAQPFPLPFKPYSWRGLAGSDLRHLVHSYRPCAALDRGAGLGLFCERAPEPGHPAALYGPERAAGGAGAGAPGGGSAGGGAAGGSGLGLYGDFGPAAAGLYERPTAAAGGLYSERGHGLHADKGAGVKVESELLCTRLLLGGGSYKCIKCSKVFSTPHGLEVHVRRSHSGTRPFACEMCGKTFGHAVSLEQHKAVHSQERSFDCKICGKSFKRSSTLSTHLLIHSDTRPYPCQYCGKRFHQKSDMKKHTFIHTGEKPHKCQVCGKAFSQSSNLITHSRKHTGFKPFGCDLCGKGFQRKVDLRRHRETQHGLK.

The SNAG domain stretch occupies residues 1–20 (MPRSFLVKSKKAHSYHQPRS). A disordered region spans residues 1-107 (MPRSFLVKSK…SPASEKSVCP (107 aa)). Serine 20 carries the phosphoserine modification. Positions 34 to 47 (APGGADGTSSAGGA) are enriched in low complexity. Serine 56 carries the phosphoserine modification. Positions 57–72 (PESQLTEAPDRSSASP) are enriched in polar residues. The interval 140-257 (RPCAALDRGA…LLLGGGSYKC (118 aa)) is required for interaction with RELA. 6 C2H2-type zinc fingers span residues 255–278 (YKCI…RRSH), 284–306 (FACE…KAVH), 312–334 (FDCK…LLIH), 340–362 (YPCQ…TFIH), 368–390 (HKCQ…SRKH), and 396–419 (FGCD…ETQH).

Interacts with U2AF1L4. Component of RCOR-GFI-KDM1A-HDAC complexes. Interacts directly with RCOR1, KDM1A and HDAC2. Also interacts with HDAC1 and HDAC3. Interacts (via the zinc-finger domain) with ARIH2; the interaction prevents GFI1 ubiquitination and proteasomal degradation. Interacts with PIAS3; the interaction relieves the inhibitory effect of PIAS3 on STAT3-mediated transcriptional activity. Forms a complex with EHMT2 and HDAC1 to promote 'Lys-9' dimethylation of H3 (H3K9Me2) and repress expression of target genes. Interacts directly with EHMT2. Component of the GFI1-AJUBA-HDAC1 repressor complex. Interacts directly with AJUBA (via ITS LIM domains); the interaction results in the HDAC-dependent corepression of a subset of GFI1 target genes and, occurs independently of the SNAG domain. Interacts with SPI1; the interaction inhibits SPI1 transcriptional activity targeted at macrophage-specific genes, repressing macrophage differentiation of myeloid progenitor cells and promoting granulocyte commitment. Interacts with RUNX1T1; the interaction represses HDAC-mediated transcriptional activity. Interacts with RELA; the interaction occurs on liposaccharide (LPS) stimulation and controls RELA DNA binding activity and regulates endotoxin-mediated TOLL-like receptor inflammatory response. Interacts (via the C-terminal zinc fingers) with ZBTB17; the interaction results in the recruitment of GFI1 to the CDKN1A/p21 and CDKNIB promoters and repression of transcription. In terms of processing, ubiquitinated.

The protein resides in the nucleus. In terms of biological role, transcription repressor essential for hematopoiesis. Functions in a cell-context and development-specific manner. Binds to 5'-TAAATCAC[AT]GCA-3' in the promoter region of a large number of genes. Component of several complexes, including the EHMT2-GFI1-HDAC1, AJUBA-GFI1-HDAC1 and RCOR-GFI-KDM1A-HDAC complexes, that suppress, via histone deacetylase (HDAC) recruitment, a number of genes implicated in multilineage blood cell development. Regulates neutrophil differentiation, promotes proliferation of lymphoid cells, and is required for granulocyte development. Inhibits SPI1 transcriptional activity at macrophage-specific genes, repressing macrophage differentiation of myeloid progenitor cells and promoting granulocyte commitment. Mediates, together with U2AF1L4, the alternative splicing of CD45 and controls T-cell receptor signaling. Regulates the endotoxin-mediated Toll-like receptor (TLR) inflammatory response by antagonizing RELA. Cooperates with CBFA2T2 to regulate ITGB1-dependent neurite growth. Controls cell-cycle progression by repressing CDKNIA/p21 transcription in response to TGFB1 via recruitment of GFI1 by ZBTB17 to the CDKNIA/p21 and CDKNIB promoters. Required for the maintenance of inner ear hair cells. In addition to its role in transcription, acts as a substrate adapter for PRMT1 in the DNA damage response: facilitates the recognition of TP53BP1 and MRE11 substrates by PRMT1, promoting their methylation and the DNA damage response. This chain is Zinc finger protein Gfi-1 (GFI1), found in Canis lupus familiaris (Dog).